A 252-amino-acid polypeptide reads, in one-letter code: TVP38/TMEM64 family membrane protein Mb1528c (252 aa).

A run of 6 helical transmembrane segments spans residues 32–52, 64–84, 88–108, 149–169, 177–197, and 209–229; these read IVGT…VPVP, LGAW…VPPF, AFTL…IAVV, WLAI…INYA, ILSF…AVVI, and LLIL…VYEI.

The protein belongs to the TVP38/TMEM64 family.

It is found in the cell membrane. The chain is TVP38/TMEM64 family membrane protein Mb1528c from Mycobacterium bovis (strain ATCC BAA-935 / AF2122/97).